Reading from the N-terminus, the 141-residue chain is Hemoglobin subunit alpha (141 aa).

A Globin domain is found at Val1–Arg141. Ser3 bears the Phosphoserine mark. 2 positions are modified to N6-succinyllysine: Lys7 and Lys11. Lys16 bears the N6-acetyllysine; alternate mark. Lys16 bears the N6-succinyllysine; alternate mark. Tyr24 bears the Phosphotyrosine mark. Residue Ser35 is modified to Phosphoserine. Lys40 is subject to N6-succinyllysine. Residue Ser49 is modified to Phosphoserine. Residue His58 participates in O2 binding. His87 serves as a coordination point for heme b. Residue Ser102 is modified to Phosphoserine. Position 108 is a phosphothreonine (Thr108). Ser124 is subject to Phosphoserine. A phosphothreonine mark is found at Thr134 and Thr137. Ser138 is subject to Phosphoserine.

The protein belongs to the globin family. In terms of assembly, heterotetramer of two alpha chains and two beta chains. In terms of tissue distribution, red blood cells.

Involved in oxygen transport from the lung to the various peripheral tissues. In terms of biological role, hemopressin acts as an antagonist peptide of the cannabinoid receptor CNR1. Hemopressin-binding efficiently blocks cannabinoid receptor CNR1 and subsequent signaling. This is Hemoglobin subunit alpha (HBA) from Panthera pardus saxicolor (Northern Persian leopard).